The following is a 29-amino-acid chain: Cyclotide mden-A (29 aa).

A cross-link (cyclopeptide (Gly-Asn)) is located at residues 1–29 (GIPTCGETCTLGTCNTPGCTCSWPICTKN). Disulfide bonds link cysteine 5–cysteine 19, cysteine 9–cysteine 21, and cysteine 14–cysteine 26.

This sequence belongs to the cyclotide family. Moebius subfamily. Post-translationally, this is a cyclic peptide.

Probably participates in a plant defense mechanism. The sequence is that of Cyclotide mden-A from Melicytus dentatus (Tree violet).